The following is a 98-amino-acid chain: Putative septation protein SpoVG (98 aa).

This sequence belongs to the SpoVG family.

Functionally, could be involved in septation. The protein is Putative septation protein SpoVG of Alkaliphilus metalliredigens (strain QYMF).